Here is a 177-residue protein sequence, read N- to C-terminus: ADP-ribose 1''-phosphate phosphatase (177 aa).

Residues 1–177 form the Macro domain; it reads MSNITYVKGN…GDMSFTVYQL (177 aa). Substrate-binding positions include 9 to 11, 24 to 26, 31 to 36, and 147 to 153; these read GNI, SCN, WGGGIA, and INSGIFG.

It belongs to the POA1 family.

It catalyses the reaction ADP-alpha-D-ribose 1''-phosphate + H2O = ADP-D-ribose + phosphate. Functionally, highly specific phosphatase involved in the metabolism of ADP-ribose 1''-phosphate (Appr1p) which is produced as a consequence of tRNA splicing. Removes ADP-ribose from glutamate residues in proteins bearing a single ADP-ribose moiety. Inactive towards proteins bearing poly-ADP-ribose. The sequence is that of ADP-ribose 1''-phosphate phosphatase (POA1) from Saccharomyces cerevisiae (strain YJM789) (Baker's yeast).